Consider the following 1041-residue polypeptide: DNA polymerase catalytic subunit (1041 aa).

Positions 1 to 23 are disordered; that stretch reads MAFFNPYFKSKNKGSDMPPKQSM.

The protein belongs to the DNA polymerase type-B family.

It localises to the host nucleus. It catalyses the reaction DNA(n) + a 2'-deoxyribonucleoside 5'-triphosphate = DNA(n+1) + diphosphate. It carries out the reaction Endonucleolytic cleavage to 5'-phosphomonoester.. Functionally, replicates viral genomic DNA. The replication complex is composed of six viral proteins: the DNA polymerase, processivity factor, primase, primase-associated factor, helicase, and ssDNA-binding protein. Additionally, the polymerase contains an intrinsic ribonuclease H (RNase H) activity that specifically degrades RNA/DNA heteroduplexes or duplex DNA substrates in the 5' to 3' direction. Therefore, it can catalyze the excision of the RNA primers that initiate the synthesis of Okazaki fragments at a replication fork during viral DNA replication. The polypeptide is DNA polymerase catalytic subunit (Elephantid herpesvirus 1 (isolate Asian elephant/Berlin/Kiba/1998) (EIHV-1)).